Consider the following 274-residue polypeptide: MSITSVPGVVDAGVLGAQSAAAVRENALLSSSLWVNVALAGIAILVFVYMGRTIRPGRPRLIWGATLMIPLVSISSYLGLLSGLTVGMIEMPAGHALAGEMVRSQWGRYLTWALSTPMILLALGLLADVDLGSLFTVIAADIGMCVTGLAAAMTTSALLFRWAFYAISCAFFVVVLSALVTDWAASASSAGTAEIFDTLRVLTVVLWLGYPIVWAVGVEGLALVQSVGVTSWAYSVLDVFAKYVFAFILLRWVANNERTVAVAGQTLGTMSSDD.

Residues 1-21 (MSITSVPGVVDAGVLGAQSAA) constitute a propeptide that is removed on maturation. The Extracellular segment spans residues 22–25 (AVRE). The helical transmembrane segment at 26–51 (NALLSSSLWVNVALAGIAILVFVYMG) threads the bilayer. Over 52-57 (RTIRPG) the chain is Cytoplasmic. The helical transmembrane segment at 58 to 81 (RPRLIWGATLMIPLVSISSYLGLL) threads the bilayer. Residues 82–105 (SGLTVGMIEMPAGHALAGEMVRSQ) are Extracellular-facing. Chloride is bound by residues Gln-105, Thr-111, and Ser-115. Residues 106 to 127 (WGRYLTWALSTPMILLALGLLA) form a helical membrane-spanning segment. Residues 128–130 (DVD) lie on the Cytoplasmic side of the membrane. The helical transmembrane segment at 131-154 (LGSLFTVIAADIGMCVTGLAAAMT) threads the bilayer. Topologically, residues 155–157 (TSA) are extracellular. The chain crosses the membrane as a helical span at residues 158 to 180 (LLFRWAFYAISCAFFVVVLSALV). Residues 181-192 (TDWAASASSAGT) lie on the Cytoplasmic side of the membrane. Residues 193-216 (AEIFDTLRVLTVVLWLGYPIVWAV) traverse the membrane as a helical segment. Residues 217-226 (GVEGLALVQS) lie on the Extracellular side of the membrane. A helical transmembrane segment spans residues 227–255 (VGVTSWAYSVLDVFAKYVFAFILLRWVAN). The residue at position 242 (Lys-242) is an N6-(retinylidene)lysine. Over 256 to 274 (NERTVAVAGQTLGTMSSDD) the chain is Cytoplasmic.

It belongs to the archaeal/bacterial/fungal opsin family. In terms of assembly, homotrimer.

It is found in the cell membrane. In terms of biological role, light-driven chloride pump. In Halobacterium salinarum (strain ATCC 29341 / DSM 671 / R1), this protein is Halorhodopsin (hop).